The sequence spans 547 residues: DNA polymerase kappa (547 aa).

Residues 18-39 (LTIEDDGSSSSDEEATLKRRLA) are disordered. Over residues 20–31 (IEDDGSSSSDEE) the composition is skewed to acidic residues. The 185-residue stretch at 132–316 (IVHVDCDAFY…LPVREVSGIG (185 aa)) folds into the UmuC domain. Residues D136 and D226 each coordinate Mg(2+). The UBZ4-type zinc-finger motif lies at 489–518 (TVPCPVCQKNIENELGILNQHVDLCLNVET). Positions 492, 495, 509, and 513 each coordinate Zn(2+).

As to quaternary structure, interacts with hus1 and rad17.

It is found in the cytoplasm. The protein localises to the nucleus. The catalysed reaction is DNA(n) + a 2'-deoxyribonucleoside 5'-triphosphate = DNA(n+1) + diphosphate. Functionally, DNA polymerase specifically involved in DNA repair. Plays an important role in translesion synthesis, where the normal high-fidelity DNA polymerases cannot proceed and DNA synthesis stalls. Has a role in meiosis. The chain is DNA polymerase kappa (mug40) from Schizosaccharomyces pombe (strain 972 / ATCC 24843) (Fission yeast).